A 1727-amino-acid chain; its full sequence is MSYNQSRPDRSETQYRRTGRSTGNQQQQQQHRSSSAAGYGKGAGAPGSAPAPSTYPDNSSLSSNRSFKKPGNAQGGGQPRVNLPPVNHPNNHNNGPNAHSRSQVTGEPGVGGPTNPTESFNRNTGPIPKAPTSQSTVMSSKINETPNTAKVAASGDASQAFPLQFGSLGPDLMVPARTTSAPPNMDDQKRAQMQQSSLRTASNVPASVPKKDSSNKGADNQLMRKEGHNPSSEKADIQVPHIAPPSQTQKSPITNIRMPSVQTPYQHTQVPHPVHFGGPNMHMQTPVTATSFQMPMPMALSMGNTPQIPPQVFYQGHPPHPMHHQGMMHQAQGHGFATPMGAQIHPQLGHVGVGLSPQYPQQQGGKYGGARKTTPVKITHPDTHEELRLDRRGDPYSEGDSTALKPHSNPPPRSQPVSSFAPRPVNLVQPSYNSNTMIYPPVSVPLNNGPMSSAQAPRYHYPVIDGSQRVQLINQPAHTAPQLIRPAAPAHLSSDSTSSVKARNAQNVMSSALPVNAKVSVKPAGVSEKLGSPKDRSHGEVNISLSQKNVEACSLSSSQQPKPSFVSGVPNSSAPPAKSPVETVPLAKSSVETVPPVKSSVETAPVTTTEIRRAEMVSESISVEDQTCKVEPPHNLTENRGQTMPDSLVSDPETATVAAKENLSLPATNGFRKQLLKVSTTSDAPTSDSVDTSIDKSTEGSSHASSEISGSSPQEKDLKCDNRTASDKLDERSVISDAKHETLSGVLEKAQNEVDGATDVCPVSEKLAVTDDTSSDLPHSTHVLSSTVPLGHSETHKSAVETNTRRNTSTKGKKKIKEILQKADAAGTTSDLYMAYKGPEEKKESSNVVHDVSNQNLLPAIPQAVEAIVDTEPVKNEPEDWEDAADVSTPKLETADNSVNAKRGSSDEVSDNCINTEKKYSRDFLLKFADLCTALPEGFDVSPDIANALIVAYMGASHHEHDSYPTPGKVMDRQASGARLDRRPSNVAGDDRWTKNQGSLPAGYGGNVGFRPGQGGNSGVLRNPRMQGPIISRPMQPVGPMGGMGRNTPDLERWQRGSNFQQKGLFPSPHTPMQVMHKAERKYQVGTIADEEQAKQRQLKSILNKLTPQNFEKLFEQVKSVNIDNAVTLSGVISQIFDKALMEPTFCEMYADFCFHLSGALPDFNENGEKITFKRLLLNKCQEEFERGEKEEEEASRVAEEGQVEQTEEEREEKRLQVRRRMLGNIRLIGELYKKRMLTEKIMHACIQKLLGYNQDPHEENIEALCKLMSTIGVMIDHNKAKFQMDGYFEKMKMLSCKQELSSRVRFMLINAIDLRKNKWQERMKVEGPKKIEEVHRDAAQERQTQANRLSRGPSMNSSGRRGHMEFSSPRGGGGMLSPPAAQMGSYHGPPQGRGFSNQDIRFDDRPSYEPRMVPMPQRSVCEEPITLGPQGGLGQGMSIRRPAVASNTYQSDATQAGGGDSRRPAGGLNGFGSHRPASPVTHGRSSPQERGTAYVHREFASLSRASDLSPEVSSARQVLQGPSATVNSPRENALSEEQLENLSLSAIKEYYSARDENEIGMCMKDMNSPAYHPTMISLWVTDSFERKDKERDLLAKLLVNLVKSADNALNEVQLVKGFESVLKTLEDAVNDAPKAAEFLGRIFGKSVTEKVVTLTEIGRLIQEGGEEPGSLIEFGLGGDVLGSVLEMIKTEAGEETLVEIRRSSGLRIENFKPHAPNRSKILEKFT.

Disordered stretches follow at residues 1–154 (MSYN…VAAS), 172–252 (LMVP…QKSP), 360–423 (PQQQ…FAPR), 552–581 (ACSL…KSPV), 678–736 (VSTT…SVIS), and 784–815 (LSST…GKKK). Over residues 25–38 (QQQQQQHRSSSAAG) the composition is skewed to low complexity. Residues 55 to 65 (YPDNSSLSSNR) are compositionally biased toward polar residues. A compositionally biased stretch (low complexity) spans 79 to 97 (PRVNLPPVNHPNNHNNGPN). Composition is skewed to polar residues over residues 114–124 (TNPTESFNRNT), 131–148 (PTSQ…TPNT), and 191–205 (AQMQ…SNVP). Composition is skewed to basic and acidic residues over residues 222 to 236 (LMRK…EKAD) and 379 to 395 (THPD…RGDP). 2 stretches are compositionally biased toward polar residues: residues 552 to 562 (ACSLSSSQQPK) and 678 to 692 (VSTT…SVDT). Over residues 699–712 (EGSSHASSEISGSS) the composition is skewed to low complexity. Residues 714–736 (QEKDLKCDNRTASDKLDERSVIS) are compositionally biased toward basic and acidic residues. The span at 800–810 (VETNTRRNTST) shows a compositional bias: polar residues. An EIF4E-binding region spans residues 916 to 928 (TEKKYSRDFLLKF). Disordered regions lie at residues 977-1007 (GARL…YGGN), 1188-1212 (GEKE…EERE), 1336-1375 (HRDA…GGGG), and 1446-1492 (ASNT…QERG). 2 stretches are compositionally biased toward basic and acidic residues: residues 979-994 (RLDR…DRWT) and 1188-1200 (GEKE…RVAE). S985 carries the phosphoserine modification. The region spanning 1096 to 1319 (QRQLKSILNK…INAIDLRKNK (224 aa)) is the MIF4G domain. Positions 1202-1211 (GQVEQTEEER) are enriched in acidic residues. 2 stretches are compositionally biased toward polar residues: residues 1342-1360 (ERQT…NSSG) and 1446-1455 (ASNTYQSDAT). Phosphoserine is present on S1529. Residues 1539–1663 (QLENLSLSAI…TLTEIGRLIQ (125 aa)) form the MI domain.

The protein belongs to the eukaryotic initiation factor 4G family. In terms of assembly, EIF4F is a multi-subunit complex, the composition of which varies with external and internal environmental conditions. It is composed of at least EIF4A, EIF4E and EIF4G. In higher plants two isoforms of EIF4F have been identified, named isoform EIF4F and isoform EIF(iso)4F. Isoform EIF4F has subunits p220 and p26, whereas isoform EIF(iso)4F has subunits p82 and p28.

In terms of biological role, component of the protein complex eIF4F, which is involved in the recognition of the mRNA cap, ATP-dependent unwinding of 5'-terminal secondary structure and recruitment of mRNA to the ribosome. Plays a role in the accumulation of some potyvirus during viral infection. Required for the accumulation of cucumber mosaic virus 3a protein and turnip crinkle virus p28 replication protein during viral infection. These proteins are necessary for cell-to-cell movement of the virus. The protein is Eukaryotic translation initiation factor 4G (EIF4G) of Arabidopsis thaliana (Mouse-ear cress).